A 672-amino-acid polypeptide reads, in one-letter code: Glycerophosphocholine phosphodiesterase GPCPD1 (672 aa).

The region spanning 1 to 113 is the CBM20 domain; it reads MTPSQVTFEI…IIIDDGQFGI (113 aa). Substrate contacts are provided by residues R68 and 86 to 87; that span reads HK. S175 is modified (phosphoserine). One can recognise a GP-PDE domain in the interval 318–618; it reads PLDVGHRGAG…DRIYDWMPEQ (301 aa). Position 608 is a phosphotyrosine (Y608).

It belongs to the glycerophosphoryl diester phosphodiesterase family.

The protein localises to the cytoplasm. Its subcellular location is the cytosol. It carries out the reaction sn-glycerol 3-phosphocholine + H2O = sn-glycerol 3-phosphate + choline + H(+). May be involved in the negative regulation of skeletal muscle differentiation, independently of its glycerophosphocholine phosphodiesterase activity. This chain is Glycerophosphocholine phosphodiesterase GPCPD1 (Gpcpd1), found in Rattus norvegicus (Rat).